The sequence spans 157 residues: Probable cyclic pyranopterin monophosphate synthase (157 aa).

Residues 75–77 and 111–112 contribute to the substrate site; these read MCH and ME. The active site involves D126.

Belongs to the MoaC family. In terms of assembly, homohexamer; trimer of dimers.

It catalyses the reaction (8S)-3',8-cyclo-7,8-dihydroguanosine 5'-triphosphate = cyclic pyranopterin phosphate + diphosphate. Its pathway is cofactor biosynthesis; molybdopterin biosynthesis. In terms of biological role, catalyzes the conversion of (8S)-3',8-cyclo-7,8-dihydroguanosine 5'-triphosphate to cyclic pyranopterin monophosphate (cPMP). This chain is Probable cyclic pyranopterin monophosphate synthase, found in Methanosarcina mazei (strain ATCC BAA-159 / DSM 3647 / Goe1 / Go1 / JCM 11833 / OCM 88) (Methanosarcina frisia).